Consider the following 225-residue polypeptide: MSNTVATMINKRNIMRNYIKIGVAGPVGAGKTALIEKLTREIASKYSVAVITNDIYTQEDAEFLTKNSLLPPERIMGVETGGCPHTAIREDASMNLEAVDEMVTRFPDVEIVFIESGGDNLSATFSPDLADVTIFVIDVAQGEKIPRKGGPGITRSDLLVINKTDLAPFVGADLSVMERDARRMRNGQPFIFTNLMKKENLDGVIGWIEKYALLKNVEEPASLVR.

G25 to T32 provides a ligand contact to GTP.

This sequence belongs to the SIMIBI class G3E GTPase family. UreG subfamily. As to quaternary structure, homodimer. UreD, UreF and UreG form a complex that acts as a GTP-hydrolysis-dependent molecular chaperone, activating the urease apoprotein by helping to assemble the nickel containing metallocenter of UreC. The UreE protein probably delivers the nickel.

Its subcellular location is the cytoplasm. Its function is as follows. Facilitates the functional incorporation of the urease nickel metallocenter. This process requires GTP hydrolysis, probably effectuated by UreG. The sequence is that of Urease accessory protein UreG from Haemophilus influenzae (strain ATCC 51907 / DSM 11121 / KW20 / Rd).